A 176-amino-acid chain; its full sequence is Ribosome maturation factor RimM (176 aa).

One can recognise a PRC barrel domain in the interval 93 to 166; that stretch reads EGEYYHADLI…RVVIELPAEI (74 aa).

The protein belongs to the RimM family. Binds ribosomal protein uS19.

Its subcellular location is the cytoplasm. In terms of biological role, an accessory protein needed during the final step in the assembly of 30S ribosomal subunit, possibly for assembly of the head region. Essential for efficient processing of 16S rRNA. May be needed both before and after RbfA during the maturation of 16S rRNA. It has affinity for free ribosomal 30S subunits but not for 70S ribosomes. The protein is Ribosome maturation factor RimM of Rhodopseudomonas palustris (strain BisB18).